Reading from the N-terminus, the 181-residue chain is uncharacterized protein (181 aa).

The protein to M.pneumoniae MPN_635 C-terminal region.

This is an uncharacterized protein from Mycoplasma pneumoniae (strain ATCC 29342 / M129 / Subtype 1) (Mycoplasmoides pneumoniae).